Consider the following 77-residue polypeptide: Conotoxin ArMKLT2-0251 (77 aa).

The N-terminal stretch at 1–22 is a signal peptide; that stretch reads MKLTCVLIVAVLILTACQLIAA. The propeptide occupies 23–46; it reads DDSRDLKRFSRRKMRDGMLNTKNM. At Q49 the chain carries Pyrrolidone carboxylic acid. 3 disulfides stabilise this stretch: C50–C65, C57–C68, and C64–C73.

Belongs to the conotoxin O1 superfamily. In terms of tissue distribution, expressed by the venom duct.

It localises to the secreted. The sequence is that of Conotoxin ArMKLT2-0251 from Conus arenatus (Sand-dusted cone).